A 383-amino-acid polypeptide reads, in one-letter code: ATP phosphoribosyltransferase regulatory subunit (383 aa).

The protein belongs to the class-II aminoacyl-tRNA synthetase family. HisZ subfamily. As to quaternary structure, heteromultimer composed of HisG and HisZ subunits.

The protein resides in the cytoplasm. The protein operates within amino-acid biosynthesis; L-histidine biosynthesis; L-histidine from 5-phospho-alpha-D-ribose 1-diphosphate: step 1/9. In terms of biological role, required for the first step of histidine biosynthesis. May allow the feedback regulation of ATP phosphoribosyltransferase activity by histidine. The protein is ATP phosphoribosyltransferase regulatory subunit of Neisseria gonorrhoeae (strain ATCC 700825 / FA 1090).